The sequence spans 212 residues: Probable transaldolase (212 aa).

The active-site Schiff-base intermediate with substrate is the Lys84.

Belongs to the transaldolase family. Type 3B subfamily.

It localises to the cytoplasm. It carries out the reaction D-sedoheptulose 7-phosphate + D-glyceraldehyde 3-phosphate = D-erythrose 4-phosphate + beta-D-fructose 6-phosphate. Its pathway is carbohydrate degradation; pentose phosphate pathway; D-glyceraldehyde 3-phosphate and beta-D-fructose 6-phosphate from D-ribose 5-phosphate and D-xylulose 5-phosphate (non-oxidative stage): step 2/3. Its function is as follows. Transaldolase is important for the balance of metabolites in the pentose-phosphate pathway. The polypeptide is Probable transaldolase (Bacillus velezensis (strain DSM 23117 / BGSC 10A6 / LMG 26770 / FZB42) (Bacillus amyloliquefaciens subsp. plantarum)).